The following is a 439-amino-acid chain: MTISKDDQARLYRYYTEPTLVTELTRKTLALVLAGGEGSRLKDLTAWRAKPAVPIGGKYRIIDFPLSNCVNSGIRRIGVLTQYKSHSLIRHLQRAWGLMRTEVGEFVEILPAQQRTHKKEWYQGTADALFQNLDIMQRHHPEYVLVLGGDHVYTMDYTQMLLYHVQTGADVTVGSVEVPVAEAAAFGVMSVDESLRITEFNEKPREPDSMPGKPGTALVSMGIYVFSKDFLYKALIEDAGATRSSHDFGKDIIPSSISRARIMAFPFRDREGKPGYWRDVGALNCYWQTNMDLCSIEPALNLYDCEWPIWTYQPQYPPAKFIFDDEGRRGEAIDSLVAGGCVLSGARVKRSVLFFATTVGCSSLVKDSVILPKVRIGRNCRISCAIIDKGTVIPDGTVIGEDPVEDAKRFHVTPEGIVLVTPRMLGQNIYARWEDEYDG.

Alpha-D-glucose 1-phosphate is bound by residues Tyr-122, Gly-187, 202 to 203, and Ser-220; that span reads EK.

Belongs to the bacterial/plant glucose-1-phosphate adenylyltransferase family. Homotetramer.

It carries out the reaction alpha-D-glucose 1-phosphate + ATP + H(+) = ADP-alpha-D-glucose + diphosphate. It participates in glycan biosynthesis; glycogen biosynthesis. Involved in the biosynthesis of ADP-glucose, a building block required for the elongation reactions to produce glycogen. Catalyzes the reaction between ATP and alpha-D-glucose 1-phosphate (G1P) to produce pyrophosphate and ADP-Glc. The chain is Glucose-1-phosphate adenylyltransferase from Thiobacillus denitrificans (strain ATCC 25259 / T1).